The chain runs to 341 residues: Glyceraldehyde-3-phosphate dehydrogenase (341 aa).

NAD(+)-binding positions include 11 to 12 (TI) and Gly109. 138-140 (SCN) provides a ligand contact to D-glyceraldehyde 3-phosphate. The Nucleophile role is filled by Cys139. Arg167 contacts NAD(+). D-glyceraldehyde 3-phosphate-binding positions include Thr169 and 192–193 (HA). Gln299 lines the NAD(+) pocket.

The protein belongs to the glyceraldehyde-3-phosphate dehydrogenase family. In terms of assembly, homotetramer.

The protein localises to the cytoplasm. The enzyme catalyses D-glyceraldehyde 3-phosphate + phosphate + NADP(+) = (2R)-3-phospho-glyceroyl phosphate + NADPH + H(+). It carries out the reaction D-glyceraldehyde 3-phosphate + phosphate + NAD(+) = (2R)-3-phospho-glyceroyl phosphate + NADH + H(+). It participates in carbohydrate degradation; glycolysis; pyruvate from D-glyceraldehyde 3-phosphate: step 1/5. This Picrophilus torridus (strain ATCC 700027 / DSM 9790 / JCM 10055 / NBRC 100828 / KAW 2/3) protein is Glyceraldehyde-3-phosphate dehydrogenase.